We begin with the raw amino-acid sequence, 1358 residues long: DNA-directed RNA polymerase subunit beta (1358 aa).

It belongs to the RNA polymerase beta chain family. In terms of assembly, the RNAP catalytic core consists of 2 alpha, 1 beta, 1 beta' and 1 omega subunit. When a sigma factor is associated with the core the holoenzyme is formed, which can initiate transcription.

It carries out the reaction RNA(n) + a ribonucleoside 5'-triphosphate = RNA(n+1) + diphosphate. DNA-dependent RNA polymerase catalyzes the transcription of DNA into RNA using the four ribonucleoside triphosphates as substrates. The sequence is that of DNA-directed RNA polymerase subunit beta from Azotobacter vinelandii (strain DJ / ATCC BAA-1303).